Consider the following 293-residue polypeptide: Phosphoribosylaminoimidazole-succinocarboxamide synthase (293 aa).

Belongs to the SAICAR synthetase family.

The catalysed reaction is 5-amino-1-(5-phospho-D-ribosyl)imidazole-4-carboxylate + L-aspartate + ATP = (2S)-2-[5-amino-1-(5-phospho-beta-D-ribosyl)imidazole-4-carboxamido]succinate + ADP + phosphate + 2 H(+). It participates in purine metabolism; IMP biosynthesis via de novo pathway; 5-amino-1-(5-phospho-D-ribosyl)imidazole-4-carboxamide from 5-amino-1-(5-phospho-D-ribosyl)imidazole-4-carboxylate: step 1/2. The chain is Phosphoribosylaminoimidazole-succinocarboxamide synthase from Desulfosudis oleivorans (strain DSM 6200 / JCM 39069 / Hxd3) (Desulfococcus oleovorans).